A 219-amino-acid chain; its full sequence is Elongation factor Ts (219 aa).

Residues S81–V84 are involved in Mg(2+) ion dislocation from EF-Tu.

This sequence belongs to the EF-Ts family.

It localises to the cytoplasm. In terms of biological role, associates with the EF-Tu.GDP complex and induces the exchange of GDP to GTP. It remains bound to the aminoacyl-tRNA.EF-Tu.GTP complex up to the GTP hydrolysis stage on the ribosome. The protein is Elongation factor Ts of Koribacter versatilis (strain Ellin345).